The chain runs to 97 residues: Type 1 phosphatases regulator YPI2 (97 aa).

Positions 1–97 are disordered; it reads MNKKKTKICC…KMMEKKSNNT (97 aa). A compositionally biased stretch (basic and acidic residues) spans 43-53; that stretch reads ENDKDLGFDER. Over residues 54–65 the composition is skewed to basic residues; that stretch reads RKRRVERRRRKL.

The protein belongs to the YPI1 family.

It localises to the nucleus. In terms of biological role, regulator of type 1 phosphatases which maintains protein phosphatase activity under strict control. The polypeptide is Type 1 phosphatases regulator YPI2 (YPI2) (Vanderwaltozyma polyspora (strain ATCC 22028 / DSM 70294 / BCRC 21397 / CBS 2163 / NBRC 10782 / NRRL Y-8283 / UCD 57-17) (Kluyveromyces polysporus)).